The sequence spans 1103 residues: Activity-dependent neuroprotector homeobox protein (1103 aa).

Residues Lys-39 and Lys-72 each participate in a glycyl lysine isopeptide (Lys-Gly) (interchain with G-Cter in SUMO2) cross-link. The C2H2-type 1; degenerate zinc-finger motif lies at 74-97 (FCCSACPFSSKFFSAYKSHFRNVH). The residue at position 98 (Ser-98) is a Phosphoserine. The C2H2-type 2; degenerate zinc-finger motif lies at 107-129 (LNCPYCTFNADKKTLETHIKIFH). The segment at 133–154 (SSAPSSSLSTFKDKNKNDGLKP) is disordered. Over residues 143–154 (FKDKNKNDGLKP) the composition is skewed to basic and acidic residues. Glycyl lysine isopeptide (Lys-Gly) (interchain with G-Cter in SUMO2) cross-links involve residues Lys-144 and Lys-155. The C2H2-type 3; degenerate zinc finger occupies 165 to 188 (YYCKKCTYRDPLYEIVRKHIYREH). Glycyl lysine isopeptide (Lys-Gly) (interchain with G-Cter in SUMO2) cross-links involve residues Lys-203, Lys-231, Lys-266, Lys-274, Lys-278, Lys-279, Lys-311, and Lys-335. A C2H2-type 4; degenerate zinc finger spans residues 221-244 (IHCKRCLFMPKSYEALVQHVIEDH). Asymmetric dimethylarginine is present on Arg-348. The neuroprotective peptide (NAP) stretch occupies residues 354-361 (NAPVSIPQ). The segment at 360–439 (PQQSQSVKQL…PAATGPPPSN (80 aa)) is disordered. Residues Lys-367 and Lys-408 each participate in a glycyl lysine isopeptide (Lys-Gly) (interchain with G-Cter in SUMO2) cross-link. The span at 393-423 (SLQTANTSSLPPGQVKSPSVSQSQASRVLGQ) shows a compositional bias: polar residues. Residues Ser-409 and Ser-413 each carry the phosphoserine modification. Lys-427 participates in a covalent cross-link: Glycyl lysine isopeptide (Lys-Gly) (interchain with G-Cter in SUMO2). Positions 427-438 (KPPPAATGPPPS) are enriched in pro residues. Residues 447 to 469 (KICTICNELFPENVYSVHFEKEH) form a C2H2-type 5; atypical zinc finger. 2 C2H2-type zinc fingers span residues 489–510 (SKCLYCNRYLPTDTLLNHMLIH) and 512–535 (LSCPYCRSTFNDVEKMAAHMRMVH). Residues Lys-600 and Lys-606 each participate in a glycyl lysine isopeptide (Lys-Gly) (interchain with G-Cter in SUMO2) cross-link. Phosphoserine is present on Ser-608. Residues Lys-616, Lys-621, Lys-632, and Lys-658 each participate in a glycyl lysine isopeptide (Lys-Gly) (interchain with G-Cter in SUMO2) cross-link. The C2H2-type 8; atypical zinc finger occupies 622-647 (TLCPLCFSILKGPISDALAHHLRERH). The C2H2-type 9; atypical zinc finger occupies 662 to 686 (YKCIHCLGVYTSNMTASTITLHLVH). The disordered stretch occupies residues 691–712 (GKTQNGQDKTNAPSRLNQSPGL). Residues 692–710 (KTQNGQDKTNAPSRLNQSP) show a composition bias toward polar residues. A Glycyl lysine isopeptide (Lys-Gly) (interchain with G-Cter in SUMO2) cross-link involves residue Lys-699. At Ser-709 the chain carries Phosphoserine. Residues Lys-716, Lys-728, and Lys-731 each participate in a glycyl lysine isopeptide (Lys-Gly) (interchain with G-Cter in SUMO2) cross-link. Residue Ser-738 is modified to Phosphoserine. Residue Lys-745 forms a Glycyl lysine isopeptide (Lys-Gly) (interchain with G-Cter in SUMO2) linkage. A DNA-binding region (homeobox) is located at residues 754 to 814 (LDPKGHEDDS…SNKRKKCVRD (61 aa)). Ser-805 is subject to Phosphoserine. Glycyl lysine isopeptide (Lys-Gly) (interchain with G-Cter in SUMO2) cross-links involve residues Lys-807, Lys-829, and Lys-835. Residues 873 to 1029 (DSFSDSFEHL…VQDDTEQLKW (157 aa)) form a disordered region. 5 positions are modified to phosphoserine: Ser-876, Ser-878, Ser-886, Ser-889, and Ser-905. Residues Lys-914, Lys-929, and Lys-936 each participate in a glycyl lysine isopeptide (Lys-Gly) (interchain with G-Cter in SUMO2) cross-link. Residues 922 to 954 (ESEKLDQKEEEDGSKYETIHLTEERAKLMHDAS) show a composition bias toward basic and acidic residues. Ser-954 and Ser-956 each carry phosphoserine. A compositionally biased stretch (polar residues) spans 972–982 (PSESGPGSRQV). Lys-1017 participates in a covalent cross-link: Glycyl lysine isopeptide (Lys-Gly) (interchain with G-Cter in SUMO2). Residues Lys-1036 and Lys-1043 each carry the N6-acetyllysine; alternate modification. Glycyl lysine isopeptide (Lys-Gly) (interchain with G-Cter in SUMO2); alternate cross-links involve residues Lys-1036 and Lys-1043. Positions 1045 to 1103 (QSQWENASENAERLPNPQIEWQNSTIDSEDGEQFDSMTDGVADPMHGSLTGVKLSSQQA) are disordered. The residue at position 1072 (Ser-1072) is a Phosphoserine.

In terms of assembly, interacts (via N-terminal region) with beta-catenin/CTNNB1 (via the central armadillo domains); interaction is direct and stabilizes CTNNB1 by modulating its phosphorylation by glycogen synthase kinase-3 beta GSK3B.

Its subcellular location is the nucleus. The protein localises to the chromosome. May be involved in transcriptional regulation. May mediate some of the neuroprotective peptide VIP-associated effects involving normal growth and cancer proliferation. Positively modulates WNT-beta-catenin/CTNN1B signaling, acting by regulating phosphorylation of, and thereby stabilizing, CTNNB1. May be required for neural induction and neuronal differentiation. May be involved in erythroid differentiation. The polypeptide is Activity-dependent neuroprotector homeobox protein (Adnp) (Rattus norvegicus (Rat)).